The chain runs to 119 residues: Platelet basic protein (119 aa).

The N-terminal stretch at 1-33 (MSLRLGAISSCTTSSPFPVLQVLLPLSLLLTTL) is a signal peptide. The propeptide occupies 34 to 39 (VPATMG). Disulfide bonds link Cys54–Cys80 and Cys56–Cys96.

The protein localises to the secreted. Functionally, chemoattractant factor for neutrophils. In Sus scrofa (Pig), this protein is Platelet basic protein (PPBP).